The chain runs to 211 residues: Protein-L-isoaspartate O-methyltransferase 2 (211 aa).

Serine 60 is an active-site residue.

The protein belongs to the methyltransferase superfamily. L-isoaspartyl/D-aspartyl protein methyltransferase family.

Its subcellular location is the cytoplasm. The enzyme catalyses [protein]-L-isoaspartate + S-adenosyl-L-methionine = [protein]-L-isoaspartate alpha-methyl ester + S-adenosyl-L-homocysteine. Functionally, catalyzes the methyl esterification of L-isoaspartyl residues in peptides and proteins that result from spontaneous decomposition of normal L-aspartyl and L-asparaginyl residues. It plays a role in the repair and/or degradation of damaged proteins. The chain is Protein-L-isoaspartate O-methyltransferase 2 from Nitrosospira multiformis (strain ATCC 25196 / NCIMB 11849 / C 71).